The following is a 98-amino-acid chain: NADH-ubiquinone oxidoreductase chain 4L (98 aa).

3 helical membrane-spanning segments follow: residues proline 2 to phenylalanine 22, serine 29 to methionine 49, and isoleucine 61 to methionine 81.

Belongs to the complex I subunit 4L family. Core subunit of respiratory chain NADH dehydrogenase (Complex I) which is composed of 45 different subunits.

Its subcellular location is the mitochondrion inner membrane. The enzyme catalyses a ubiquinone + NADH + 5 H(+)(in) = a ubiquinol + NAD(+) + 4 H(+)(out). Functionally, core subunit of the mitochondrial membrane respiratory chain NADH dehydrogenase (Complex I) which catalyzes electron transfer from NADH through the respiratory chain, using ubiquinone as an electron acceptor. Part of the enzyme membrane arm which is embedded in the lipid bilayer and involved in proton translocation. The protein is NADH-ubiquinone oxidoreductase chain 4L (MT-ND4L) of Lepilemur seali (Seal's sportive lemur).